A 148-amino-acid chain; its full sequence is Protein F15 (148 aa).

It belongs to the poxviridae F15 protein family.

The chain is Protein F15 from Fowlpox virus (strain NVSL) (FPV).